Reading from the N-terminus, the 264-residue chain is Short-chain dehydrogenase/reductase ucsE (264 aa).

The helical transmembrane segment at 13 to 32 threads the bilayer; that stretch reads LVVVVGGTSGLGFAVAQAAV. NADP(+)-binding residues include Leu23, Ser43, and Asp74. N-linked (GlcNAc...) asparagine glycosylation occurs at Asn125. NADP(+) is bound by residues Arg130 and Lys139. The Proton donor role is filled by Ser157. NADP(+) is bound by residues Val202 and Thr204.

This sequence belongs to the short-chain dehydrogenases/reductases (SDR) family. NADP(+) serves as cofactor.

The protein resides in the membrane. Its pathway is mycotoxin biosynthesis. Functionally, short-chain dehydrogenase/reductase; part of the gene cluster that mediates the biosynthesis of UCS1025A, a member of the pyrrolizidinone family that acts as a strong telomerase inhibitor and displays potent antibacterial and antitumor properties. These compounds share a hemiaminal-containing pyrrolizidinone core fused with a gamma-lactone, giving a furopyrrolizidine that is connected to a decalin fragment. The polyketide synthase module (PKS) of the PKS-NRPS ucsA is responsible for the synthesis of the polyketide backbone via the condensation of an acetyl-CoA starter unit with 6 malonyl-CoA units. The downstream nonribosomal peptide synthetase (NRPS) module then amidates the carboxyl end of the polyketide with a 2S,3S-methylproline derived from L-isoleucine by the 2-oxoglutarate-dependent dioxygenase ucsF which converts L-isoleucine to (4S,5S)-4-methylpyrroline-5-carboxylate that is further converted to 2S,3S-methylproline by the pyrroline-5-carboxylate reductase ucsG. Reductive release of the completed aminoacyl polyketide from the assembly line can form the 3-pyrrolin-2-one structure via an intramolecular Knoevenagel reaction. Because ucsA lacks a designated enoylreductase (ER) domain, the required activity is provided the enoyl reductase ucsL. This keto acyclic precursor is the substrate of the Diels-Alderase ucsH, that catalyzes the Diels-Alder cycloaddition. Oxidation of the 3S-methyl group to a carboxylate by the cytochrome P450 monooxygenase ucsK allows an oxa-Michael cyclization that might involve the reductase/dehydrogenase ucsI and which furnishes the furopyrrolizidine. The oxidase ucsJ likely plays a critical role in stereoselective reduction of the C5-C6 double bond to afford the required R-configured carboxylate group. Further enolization and oxidation at C5 by an unidentified enzyme affords the last intermediate that can undergo oxa-Michael cyclization to yield UCS1025A. The sequence is that of Short-chain dehydrogenase/reductase ucsE from Acremonium sp.